We begin with the raw amino-acid sequence, 315 residues long: Tyrosine recombinase XerC (315 aa).

Positions Ala13 to Glu104 constitute a Core-binding (CB) domain. The Tyr recombinase domain maps to Ser125–Asp309. Catalysis depends on residues Arg168, Lys193, His261, Arg264, and His287. Tyr296 serves as the catalytic O-(3'-phospho-DNA)-tyrosine intermediate.

Belongs to the 'phage' integrase family. XerC subfamily. As to quaternary structure, forms a cyclic heterotetrameric complex composed of two molecules of XerC and two molecules of XerD.

Its subcellular location is the cytoplasm. Site-specific tyrosine recombinase, which acts by catalyzing the cutting and rejoining of the recombining DNA molecules. The XerC-XerD complex is essential to convert dimers of the bacterial chromosome into monomers to permit their segregation at cell division. It also contributes to the segregational stability of plasmids. This is Tyrosine recombinase XerC from Brucella melitensis biotype 1 (strain ATCC 23456 / CCUG 17765 / NCTC 10094 / 16M).